The primary structure comprises 344 residues: Methionine import ATP-binding protein MetN (344 aa).

One can recognise an ABC transporter domain in the interval 7–245 (ISLKKISRCF…PQDDTTIAML (239 aa)). 42–49 (GRSGAGKS) serves as a coordination point for ATP.

The protein belongs to the ABC transporter superfamily. Methionine importer (TC 3.A.1.24) family. In terms of assembly, the complex is composed of two ATP-binding proteins (MetN), two transmembrane proteins (MetI) and a solute-binding protein (MetQ).

The protein localises to the cell inner membrane. It catalyses the reaction L-methionine(out) + ATP + H2O = L-methionine(in) + ADP + phosphate + H(+). The catalysed reaction is D-methionine(out) + ATP + H2O = D-methionine(in) + ADP + phosphate + H(+). Part of the ABC transporter complex MetNIQ involved in methionine import. Responsible for energy coupling to the transport system. This chain is Methionine import ATP-binding protein MetN, found in Bartonella henselae (strain ATCC 49882 / DSM 28221 / CCUG 30454 / Houston 1) (Rochalimaea henselae).